The following is a 315-amino-acid chain: Phosphatidylglycerol--prolipoprotein diacylglyceryl transferase (315 aa).

2 consecutive transmembrane segments (helical) span residues 19 to 39 (FTIHMYAICILIGICVAVWIL) and 93 to 113 (VWEGGMAIFGGISVGTLVAFL). R141 serves as a coordination point for a 1,2-diacyl-sn-glycero-3-phospho-(1'-sn-glycerol). Helical transmembrane passes span 188–208 (LFHPTFLYEMIWNLIGAALII) and 256–276 (VWTAIIVFVLGCILFVVLYQY).

The protein belongs to the Lgt family.

It localises to the cell membrane. The enzyme catalyses L-cysteinyl-[prolipoprotein] + a 1,2-diacyl-sn-glycero-3-phospho-(1'-sn-glycerol) = an S-1,2-diacyl-sn-glyceryl-L-cysteinyl-[prolipoprotein] + sn-glycerol 1-phosphate + H(+). It functions in the pathway protein modification; lipoprotein biosynthesis (diacylglyceryl transfer). Functionally, catalyzes the transfer of the diacylglyceryl group from phosphatidylglycerol to the sulfhydryl group of the N-terminal cysteine of a prolipoprotein, the first step in the formation of mature lipoproteins. In Bifidobacterium longum (strain DJO10A), this protein is Phosphatidylglycerol--prolipoprotein diacylglyceryl transferase.